A 90-amino-acid chain; its full sequence is Lectin-1 (90 aa).

Gln-1 carries the pyrrolidone carboxylic acid modification. Cys-46 and Cys-71 are disulfide-bonded.

In terms of processing, the N-terminus is blocked. Post-translationally, contains seven disulfide bonds. Proteolytically cleaved. Major form may consist of cleaved, disulfide-bonded subunits.

Lectin with specificity for complex N-linked glycans and O-linked glycans. Has hemagglutinating activity towards rabbit erythrocytes that is inhibited by N-acetyl-D-galactosamine. The polypeptide is Lectin-1 (Hypnea cervicornis (Brazilian red alga)).